A 106-amino-acid chain; its full sequence is Glycoprotein GP16 (106 aa).

In terms of processing, glycosylated.

The protein localises to the host cytoplasm. Its function is as follows. May be involved in formation or transport of the nucleocapsid-containing vesicles around the nuclear membrane. The chain is Glycoprotein GP16 (GP16) from Autographa californica nuclear polyhedrosis virus (AcMNPV).